We begin with the raw amino-acid sequence, 30 residues long: 2-enoate reductase (30 aa).

In terms of assembly, dodecamer; tetramer of trimers. The cofactor is iron-sulfur cluster. It depends on FAD as a cofactor. Requires FMN as cofactor.

The enzyme catalyses butanoate + NAD(+) = (2E)-2-butenoate + NADH + H(+). Functionally, involved in fermentation of amino acids (Stickland reaction) such as leucine, isoleucine, valine and phenylalanine. The sequence is that of 2-enoate reductase from Clostridium tyrobutyricum.